Consider the following 329-residue polypeptide: Ribose-phosphate pyrophosphokinase B (329 aa).

Mg(2+)-binding residues include Asp131, His133, and Glu146. The binding of phosphoribosylpyrophosphate stretch occupies residues 227–242 (TGKIAIIIDDIADTCK).

It belongs to the ribose-phosphate pyrophosphokinase family. The cofactor is Mg(2+).

Its subcellular location is the cytoplasm. The catalysed reaction is D-ribose 5-phosphate + ATP = 5-phospho-alpha-D-ribose 1-diphosphate + AMP + H(+). It participates in metabolic intermediate biosynthesis; 5-phospho-alpha-D-ribose 1-diphosphate biosynthesis; 5-phospho-alpha-D-ribose 1-diphosphate from D-ribose 5-phosphate (route I): step 1/1. The sequence is that of Ribose-phosphate pyrophosphokinase B (prsB) from Dictyostelium discoideum (Social amoeba).